Reading from the N-terminus, the 332-residue chain is HTH-type transcriptional regulator IdnR (332 aa).

The 55-residue stretch at 6-60 (ISLQDIATLAGVTKMTVSRYIRSPKKVAKETGERIAKIMEEINYIPNRAPGMLLN) folds into the HTH lacI-type domain. Positions 8 to 27 (LQDIATLAGVTKMTVSRYIR) form a DNA-binding region, H-T-H motif.

In terms of biological role, idn operon regulator. May repress gntKU and gntT genes when growing on L-idonate. This is HTH-type transcriptional regulator IdnR (idnR) from Escherichia coli (strain K12).